We begin with the raw amino-acid sequence, 237 residues long: Ribosomal RNA small subunit methyltransferase G (237 aa).

S-adenosyl-L-methionine-binding positions include Gly-78, Phe-83, 129–130, and Arg-148; that span reads AE. The disordered stretch occupies residues 218–237; sequence KKETPNKYPRKAGMPNKRPL.

The protein belongs to the methyltransferase superfamily. RNA methyltransferase RsmG family.

The protein resides in the cytoplasm. Specifically methylates the N7 position of a guanine in 16S rRNA. This Streptococcus sanguinis (strain SK36) protein is Ribosomal RNA small subunit methyltransferase G.